Here is a 486-residue protein sequence, read N- to C-terminus: Ribulose bisphosphate carboxylase large chain, chromosomal (486 aa).

Substrate is bound by residues Asn-126 and Thr-176. The Proton acceptor role is filled by Lys-178. Lys-180 is a substrate binding site. 3 residues coordinate Mg(2+): Lys-204, Asp-206, and Glu-207. Lys-204 is modified (N6-carboxylysine). His-296 acts as the Proton acceptor in catalysis. 3 residues coordinate substrate: Arg-297, His-329, and Ser-381.

This sequence belongs to the RuBisCO large chain family. Type I subfamily. Heterohexadecamer of 8 large chains and 8 small chains; disulfide-linked. The disulfide link is formed within the large subunit homodimers. Requires Mg(2+) as cofactor. Post-translationally, the disulfide bond which can form between Cys-278 in the large chain dimeric partners within the hexadecamer appears to be associated with oxidative stress and protein turnover.

The catalysed reaction is 2 (2R)-3-phosphoglycerate + 2 H(+) = D-ribulose 1,5-bisphosphate + CO2 + H2O. The enzyme catalyses D-ribulose 1,5-bisphosphate + O2 = 2-phosphoglycolate + (2R)-3-phosphoglycerate + 2 H(+). Functionally, ruBisCO catalyzes two reactions: the carboxylation of D-ribulose 1,5-bisphosphate, the primary event in carbon dioxide fixation, as well as the oxidative fragmentation of the pentose substrate. Both reactions occur simultaneously and in competition at the same active site. In Cupriavidus necator (strain ATCC 17699 / DSM 428 / KCTC 22496 / NCIMB 10442 / H16 / Stanier 337) (Ralstonia eutropha), this protein is Ribulose bisphosphate carboxylase large chain, chromosomal (cbbL1).